The chain runs to 557 residues: Formate--tetrahydrofolate ligase 2 (557 aa).

66-73 (TPAGEGKT) is a binding site for ATP.

This sequence belongs to the formate--tetrahydrofolate ligase family.

It catalyses the reaction (6S)-5,6,7,8-tetrahydrofolate + formate + ATP = (6R)-10-formyltetrahydrofolate + ADP + phosphate. It participates in one-carbon metabolism; tetrahydrofolate interconversion. In Streptococcus pyogenes serotype M18 (strain MGAS8232), this protein is Formate--tetrahydrofolate ligase 2.